The sequence spans 356 residues: Phospho-N-acetylmuramoyl-pentapeptide-transferase (356 aa).

Transmembrane regions (helical) follow at residues threonine 25–alanine 45, glycine 70–tryptophan 90, leucine 93–phenylalanine 113, phenylalanine 138–leucine 158, tyrosine 164–glycine 184, glycine 195–serine 215, leucine 235–proline 255, alanine 258–valine 278, isoleucine 284–valine 304, and glutamine 333–leucine 353.

It belongs to the glycosyltransferase 4 family. MraY subfamily. The cofactor is Mg(2+).

The protein localises to the cell inner membrane. It catalyses the reaction UDP-N-acetyl-alpha-D-muramoyl-L-alanyl-gamma-D-glutamyl-meso-2,6-diaminopimeloyl-D-alanyl-D-alanine + di-trans,octa-cis-undecaprenyl phosphate = di-trans,octa-cis-undecaprenyl diphospho-N-acetyl-alpha-D-muramoyl-L-alanyl-D-glutamyl-meso-2,6-diaminopimeloyl-D-alanyl-D-alanine + UMP. It participates in cell wall biogenesis; peptidoglycan biosynthesis. Its function is as follows. Catalyzes the initial step of the lipid cycle reactions in the biosynthesis of the cell wall peptidoglycan: transfers peptidoglycan precursor phospho-MurNAc-pentapeptide from UDP-MurNAc-pentapeptide onto the lipid carrier undecaprenyl phosphate, yielding undecaprenyl-pyrophosphoryl-MurNAc-pentapeptide, known as lipid I. The sequence is that of Phospho-N-acetylmuramoyl-pentapeptide-transferase from Bartonella quintana (strain Toulouse) (Rochalimaea quintana).